A 232-amino-acid chain; its full sequence is MKFQARVLTLYPEMFPGFLGCSLAGQALKQGIWSLETVQIRDFALDKHHSVDDTPAGGGAGMVMRADVLAAALDSCPNDSPRLLMSPRGRLLNQAYARSLARSSGVTLVCGRFEGVDERIIEARELEEVSIGDYILSGGETAALVLLDAIVRLLPGVMGNEISAKCESFENGLLEHPQYTRPAVFEGRGIPPVLTSGHHKAIANWRQQQAESLTRQRRPDLYALYNKNRQKT.

S-adenosyl-L-methionine is bound by residues Gly111 and 131–136; that span reads IGDYIL.

This sequence belongs to the RNA methyltransferase TrmD family. As to quaternary structure, homodimer.

Its subcellular location is the cytoplasm. The enzyme catalyses guanosine(37) in tRNA + S-adenosyl-L-methionine = N(1)-methylguanosine(37) in tRNA + S-adenosyl-L-homocysteine + H(+). Functionally, specifically methylates guanosine-37 in various tRNAs. This chain is tRNA (guanine-N(1)-)-methyltransferase, found in Bartonella henselae (strain ATCC 49882 / DSM 28221 / CCUG 30454 / Houston 1) (Rochalimaea henselae).